The following is a 144-amino-acid chain: Eukaryotic translation initiation factor 1A, Y-chromosomal (144 aa).

Over residues 1-15 the composition is skewed to basic residues; that stretch reads MPKNKGKGGKNRRRG. Residues 1–26 are disordered; the sequence is MPKNKGKGGKNRRRGKNENESEKREL. Positions 16–26 are enriched in basic and acidic residues; that stretch reads KNENESEKREL. An S1-like domain is found at 22-96; that stretch reads EKRELVFKED…NKADVILKYN (75 aa). Residue Lys88 forms a Glycyl lysine isopeptide (Lys-Gly) (interchain with G-Cter in ubiquitin) linkage. Residues 114-144 are disordered; that stretch reads KINETDTFGPGDDDEVQFDDIGDDDEDIDDI. Acidic residues predominate over residues 124 to 144; that stretch reads GDDDEVQFDDIGDDDEDIDDI.

This sequence belongs to the eIF-1A family. In terms of assembly, component of the 43S pre-initiation complex (43S PIC), which is composed of the 40S ribosomal subunit, EIF1, eIF1A (EIF1AX), eIF3 complex, EIF5 and eIF2-GTP-initiator tRNA complex (eIF2 ternary complex). Interacts with EIF5; this interaction contributes to the maintenance of EIF1 within the open 43S PIC. Interacts through its C-terminal domain (CTD) with the CTD of EIF5B; from the location of the start codon by the 43S complex until the formation of the 80S complex. As to expression, ubiquitous.

It localises to the cytoplasm. Its function is as follows. Component of the 43S pre-initiation complex (43S PIC), which binds to the mRNA cap-proximal region, scans mRNA 5'-untranslated region, and locates the initiation codon. This protein enhances formation of the cap-proximal complex. Together with EIF1, facilitates scanning, start codon recognition, promotion of the assembly of 48S complex at the initiation codon (43S PIC becomes 48S PIC after the start codon is reached), and dissociation of aberrant complexes. After start codon location, together with EIF5B orients the initiator methionine-tRNA in a conformation that allows 60S ribosomal subunit joining to form the 80S initiation complex. Is released after 80S initiation complex formation, just after GTP hydrolysis by EIF5B, and before release of EIF5B. Its globular part is located in the A site of the 40S ribosomal subunit. Its interaction with EIF5 during scanning contribute to the maintenance of EIF1 within the open 43S PIC. In contrast to yeast orthologs, does not bind EIF1. The sequence is that of Eukaryotic translation initiation factor 1A, Y-chromosomal (EIF1AY) from Pan troglodytes (Chimpanzee).